A 283-amino-acid chain; its full sequence is Extensin (283 aa).

An N-terminal signal peptide occupies residues 1–24 (MMGGKAALLLALVAVTLAVVEIQA). A disordered region spans residues 27–283 (GYGYGGGYPT…PPPPPPPPYY (257 aa)). Residues 36–45 (TPTPKPPAKG) are compositionally biased toward pro residues. The span at 46–69 (PKPEKPPTKGHGHKPEKPPKEHKP) shows a compositional bias: basic and acidic residues. 2 stretches are compositionally biased toward pro residues: residues 70-264 (TPPT…PTYT) and 272-283 (SSPPPPPPPPYY).

Hydroxylated on proline residues in the S-P-P-P-P repeat. In terms of processing, O-glycosylated on hydroxyprolines.

The protein localises to the secreted. It localises to the primary cell wall. Its function is as follows. Structural component in primary cell wall. The sequence is that of Extensin (HRGP) from Sorghum bicolor (Sorghum).